Consider the following 1058-residue polypeptide: Carbamoyl phosphate synthase large chain (1058 aa).

The carboxyphosphate synthetic domain stretch occupies residues 1–401; the sequence is MPKRKDIQKI…SLLKACRSLE (401 aa). ATP contacts are provided by Arg-129, Arg-169, Gly-175, Gly-176, Arg-208, Ile-210, Glu-215, Gly-241, Ile-242, His-243, Gln-284, and Glu-298. The ATP-grasp 1 domain occupies 133-327; sequence KQLMQELDQP…IAKLAAKIAV (195 aa). Mg(2+) is bound by residues Gln-284, Glu-298, and Asn-300. Residues Gln-284, Glu-298, and Asn-300 each coordinate Mn(2+). The interval 402-546 is oligomerization domain; the sequence is IGVCHNEMTS…YSTYELENES (145 aa). Residues 547–929 are carbamoyl phosphate synthetic domain; sequence VQSNKESILV…ALYKAFEANN (383 aa). Positions 671-861 constitute an ATP-grasp 2 domain; the sequence is EKALKELGIP…MAQIATKLIL (191 aa). Residues Arg-707, Ser-746, Ile-748, Glu-752, Gly-777, Val-778, His-779, Ser-780, Gln-820, and Glu-832 each coordinate ATP. Mg(2+)-binding residues include Gln-820, Glu-832, and Asn-834. Mn(2+)-binding residues include Gln-820, Glu-832, and Asn-834. The MGS-like domain occupies 930 to 1058; it reads SHLSEFGQIV…ESRCFNIEAI (129 aa). Positions 930–1058 are allosteric domain; sequence SHLSEFGQIV…ESRCFNIEAI (129 aa).

Belongs to the CarB family. As to quaternary structure, composed of two chains; the small (or glutamine) chain promotes the hydrolysis of glutamine to ammonia, which is used by the large (or ammonia) chain to synthesize carbamoyl phosphate. Tetramer of heterodimers (alpha,beta)4. The cofactor is Mg(2+). It depends on Mn(2+) as a cofactor.

It carries out the reaction hydrogencarbonate + L-glutamine + 2 ATP + H2O = carbamoyl phosphate + L-glutamate + 2 ADP + phosphate + 2 H(+). It catalyses the reaction hydrogencarbonate + NH4(+) + 2 ATP = carbamoyl phosphate + 2 ADP + phosphate + 2 H(+). It participates in amino-acid biosynthesis; L-arginine biosynthesis; carbamoyl phosphate from bicarbonate: step 1/1. The protein operates within pyrimidine metabolism; UMP biosynthesis via de novo pathway; (S)-dihydroorotate from bicarbonate: step 1/3. Large subunit of the glutamine-dependent carbamoyl phosphate synthetase (CPSase). CPSase catalyzes the formation of carbamoyl phosphate from the ammonia moiety of glutamine, carbonate, and phosphate donated by ATP, constituting the first step of 2 biosynthetic pathways, one leading to arginine and/or urea and the other to pyrimidine nucleotides. The large subunit (synthetase) binds the substrates ammonia (free or transferred from glutamine from the small subunit), hydrogencarbonate and ATP and carries out an ATP-coupled ligase reaction, activating hydrogencarbonate by forming carboxy phosphate which reacts with ammonia to form carbamoyl phosphate. In Streptococcus pyogenes serotype M3 (strain ATCC BAA-595 / MGAS315), this protein is Carbamoyl phosphate synthase large chain.